Reading from the N-terminus, the 138-residue chain is Large ribosomal subunit protein uL16 (138 aa).

The protein belongs to the universal ribosomal protein uL16 family. As to quaternary structure, part of the 50S ribosomal subunit.

Functionally, binds 23S rRNA and is also seen to make contacts with the A and possibly P site tRNAs. This is Large ribosomal subunit protein uL16 from Corynebacterium kroppenstedtii (strain DSM 44385 / JCM 11950 / CIP 105744 / CCUG 35717).